Here is a 76-residue protein sequence, read N- to C-terminus: Short coiled-coil protein B (76 aa).

A coiled-coil region spans residues 6-52; it reads ENQVELEEKTRLINQVLELQNTLEDLSARVDAVKEENLKLKSENQVL.

It belongs to the SCOC family.

The protein localises to the golgi apparatus membrane. Its subcellular location is the golgi apparatus. It localises to the trans-Golgi network. It is found in the cytoplasm. The protein resides in the cytosol. Functionally, positive regulator of amino acid starvation-induced autophagy. In Danio rerio (Zebrafish), this protein is Short coiled-coil protein B (scocb).